A 204-amino-acid polypeptide reads, in one-letter code: Wound-induced proteinase inhibitor 2 (204 aa).

An N-terminal signal peptide occupies residues 1 to 25; it reads MAVPKEVSFLASLLVLGILLLHVDA. Tandem repeats lie at residues 25–67, 68–125, and 126–183. 6 disulfides stabilise this stretch: Cys28-Cys100, Cys38-Cys75, Cys41-Cys59, Cys42-Cys71, Cys48-Cys84, and Cys99-Cys117. The stretch at 184–204 is one 4; truncated repeat; the sequence is PKACPKNCDPNIAYSLCLYEK.

This sequence belongs to the protease inhibitor I20 (potato type II proteinase inhibitor) family.

This chain is Wound-induced proteinase inhibitor 2 (PIN2), found in Capsicum annuum (Capsicum pepper).